A 484-amino-acid chain; its full sequence is MRSAYPVLTALLVVASSQIAAGSGHQLQAYDHDRITDDNAVMKSLSTRFLRGSRDVHNNVANEERSVYSVLARMIKKGIKKMPRTAEVLKMKPHIKKASKKSPHEARLVKELFHAAEAKETMQGAREYKKLRRATRAAVEALEKHWNPSKTAVSGDAFHDIHSNQMLSVKKWKFNLTGLKPMVVNDEHHGMIDSVHKAFLTVCDKNVKPTRAETSYLWGLMNWKLAKYPRRSHKESLIEHAQRRVLLDMRKMKATKKVWPEWENLPDSLKFGVLDYLLNLHYQRLVRMYNIFARNRPDRNPAPLNPELNPVGNTGTSAAMAVAENPKGQSPYPSTPLTAASTSKGGRSNLKKRSKRTSDGNTDTASFPSKKLKVRSSKSVMPLLTEPTTSGDHSAPAKKSKSSSSGPSRAFAPDKSGDQTFITENSRLSFDGPSSAVDPFKQSKVHESKSLAPSSSVLTPEDVDTELSLGGIYDRSTYKAPSKP.

An N-terminal signal peptide occupies residues 1 to 24 (MRSAYPVLTALLVVASSQIAAGSG). The RxLR-dEER signature appears at 48–65 (RFLRGSRDVHNNVANEER). Residue Asn175 is glycosylated (N-linked (GlcNAc...) asparagine). Residues 324-463 (ENPKGQSPYP…SSSVLTPEDV (140 aa)) are disordered. The span at 327–346 (KGQSPYPSTPLTAASTSKGG) shows a compositional bias: polar residues. Residues 402 to 413 (SSSSGPSRAFAP) are compositionally biased toward low complexity. Positions 418-428 (DQTFITENSRL) are enriched in polar residues.

This sequence belongs to the RxLR effector family.

It is found in the secreted. The protein localises to the host nucleus. Its function is as follows. Secreted effector that completely suppresses the host cell death induced by cell death-inducing proteins. The protein is Secreted RxLR effector protein 104 of Plasmopara viticola (Downy mildew of grapevine).